The sequence spans 179 residues: 3-hydroxyanthranilate 3,4-dioxygenase (179 aa).

Residue Arg-47 coordinates O2. Positions 51, 57, and 96 each coordinate Fe cation. A substrate-binding site is contributed by Glu-57. Positions 100 and 110 each coordinate substrate. Positions 125, 128, 162, and 165 each coordinate Fe cation.

It belongs to the 3-HAO family. The cofactor is Fe(2+).

It carries out the reaction 3-hydroxyanthranilate + O2 = (2Z,4Z)-2-amino-3-carboxymuconate 6-semialdehyde. It participates in cofactor biosynthesis; NAD(+) biosynthesis; quinolinate from L-kynurenine: step 3/3. Functionally, catalyzes the oxidative ring opening of 3-hydroxyanthranilate to 2-amino-3-carboxymuconate semialdehyde, which spontaneously cyclizes to quinolinate. The chain is 3-hydroxyanthranilate 3,4-dioxygenase from Bacillus cereus (strain 03BB102).